Consider the following 248-residue polypeptide: UPF0246 protein RPR_00055 (248 aa).

This sequence belongs to the UPF0246 family.

The protein is UPF0246 protein RPR_00055 of Rickettsia peacockii (strain Rustic).